The primary structure comprises 330 residues: D-lactate dehydrogenase (330 aa).

NAD(+)-binding positions include 156 to 157 (RI), Asp176, 206 to 207 (VP), 233 to 235 (AAR), and Asp259. Arg235 is a catalytic residue. Residue Glu264 is part of the active site. Catalysis depends on His296, which acts as the Proton donor.

Belongs to the D-isomer specific 2-hydroxyacid dehydrogenase family.

It carries out the reaction (R)-lactate + NAD(+) = pyruvate + NADH + H(+). The protein is D-lactate dehydrogenase (ldhD) of Staphylococcus epidermidis (strain ATCC 35984 / DSM 28319 / BCRC 17069 / CCUG 31568 / BM 3577 / RP62A).